A 377-amino-acid polypeptide reads, in one-letter code: DnaJ-related protein SCJ1 (377 aa).

Residues 1-21 form the signal peptide; that stretch reads MIPKLYIHLILSLLLLPLILA. The J domain maps to 23–88; that stretch reads DYYAILEIDK…EKKKIYDQFG (66 aa). Residues 156–237 form a CR-type zinc finger; the sequence is GSSIEFTLNL…CHGKKVTKKN (82 aa). CXXCXGXG motif repeat units lie at residues 169–176, 185–192, 211–218, and 225–232; these read CDACHGSG, CPDCQGRG, CGRCGGTG, and CKTCHGKK. The Cell attachment site motif lies at 288–290; that stretch reads RGD. The Prevents secretion from ER signature appears at 374 to 377; it reads KDEL.

The protein resides in the endoplasmic reticulum lumen. Regulates protein folding in the endoplasmic reticulum lumen. Probably acts as a J-protein for the Hsp70-type chaperone KAR2 by stimulating its ATP-dependent reaction cycle and initiating folding reactions. Also involved in the endoplasmic reticulum-associated degradation (ERAD) process. Cooperates with KAR2 and another J-protein JEM1 to facilitate the export of ERAD substrates to the cytoplasm by maintaining them in a translocation-competent state and preventing their aggregation in the endoplasmic reticulum lumen. The sequence is that of DnaJ-related protein SCJ1 (SCJ1) from Saccharomyces cerevisiae (strain ATCC 204508 / S288c) (Baker's yeast).